Here is a 77-residue protein sequence, read N- to C-terminus: MPKCPKCDKEVYFAERVTSLGKDWHRPCLKCEKCGKTLTSGGHAEHEGKPYCNHPCYSAMFGPKGFGRGGAESHTFK.

One can recognise an LIM zinc-binding domain in the interval 2-63 (PKCPKCDKEV…HPCYSAMFGP (62 aa)). 2 positions are modified to N6-acetyllysine: Lys9 and Lys22. Arg68 carries the omega-N-methylarginine modification.

Its function is as follows. Seems to have a role in zinc absorption and may function as an intracellular zinc transport protein. The chain is Cysteine-rich protein 1 (Crip1) from Mus musculus (Mouse).